Here is a 199-residue protein sequence, read N- to C-terminus: Probable chemoreceptor glutamine deamidase CheD (199 aa).

This sequence belongs to the CheD family.

The enzyme catalyses L-glutaminyl-[protein] + H2O = L-glutamyl-[protein] + NH4(+). Its function is as follows. Probably deamidates glutamine residues to glutamate on methyl-accepting chemotaxis receptors (MCPs), playing an important role in chemotaxis. The chain is Probable chemoreceptor glutamine deamidase CheD from Cereibacter sphaeroides (strain ATCC 17025 / ATH 2.4.3) (Rhodobacter sphaeroides).